Reading from the N-terminus, the 240-residue chain is Glutathione S-transferase theta-1 (240 aa).

Residues 2–82 (GLELYLDLLS…YLARKYKVPD (81 aa)) form the GST N-terminal domain. Glutathione contacts are provided by residues histidine 40, 53-54 (KV), and 66-67 (ES). The GST C-terminal domain occupies 88-226 (DLQACARVDE…AKDSQPADPT (139 aa)).

The protein belongs to the GST superfamily. Theta family. As to quaternary structure, homodimer.

The protein resides in the cytoplasm. The enzyme catalyses RX + glutathione = an S-substituted glutathione + a halide anion + H(+). Its function is as follows. Conjugation of reduced glutathione to a wide number of exogenous and endogenous hydrophobic electrophiles. Also binds steroids, bilirubin, carcinogens and numerous organic anions. Has dichloromethane dehalogenase activity. The sequence is that of Glutathione S-transferase theta-1 (GSTT1) from Bos taurus (Bovine).